Reading from the N-terminus, the 1028-residue chain is Sporulation-specific protein 3 (1028 aa).

Its subcellular location is the prospore membrane. In terms of biological role, has a role in spore morphogenesis. Involved in the assembly of the forespore membrane. In Schizosaccharomyces pombe (strain 972 / ATCC 24843) (Fission yeast), this protein is Sporulation-specific protein 3 (spo3).